A 31-amino-acid polypeptide reads, in one-letter code: Electron transfer flavoprotein-ubiquinone oxidoreductase (31 aa).

Residue Val-11–Ile-25 participates in FAD binding.

In terms of assembly, monomer. Requires [4Fe-4S] cluster as cofactor. The cofactor is FAD.

The enzyme catalyses a ubiquinone + reduced [electron-transfer flavoprotein] = a ubiquinol + oxidized [electron-transfer flavoprotein] + H(+). Accepts electrons from ETF and reduces ubiquinone. This is Electron transfer flavoprotein-ubiquinone oxidoreductase from Paracoccus denitrificans.